A 924-amino-acid chain; its full sequence is Ubiquitin carboxyl-terminal hydrolase 5 (924 aa).

The 131-residue stretch at 15 to 145 folds into the DUSP domain; it reads LSPEEERVFI…GPTLARRVIS (131 aa). Residues 64–83 show a composition bias toward polar residues; sequence TNDGSSLSEHCDSPGSSTLK. Positions 64 to 87 are disordered; it reads TNDGSSLSEHCDSPGSSTLKKPSR. Positions 317 to 916 constitute a USP domain; the sequence is TGLLNLGNTC…AAYVLFYRRK (600 aa). Catalysis depends on Cys326, which acts as the Nucleophile. The span at 648–667 shows a compositional bias: basic and acidic residues; that stretch reads REESVGKKGNSDSSIPERRS. A disordered region spans residues 648–690; the sequence is REESVGKKGNSDSSIPERRSARFNNTEEEDKVGGLKKAKKSNS. The Proton acceptor role is filled by His874.

Belongs to the peptidase C19 family.

The catalysed reaction is Thiol-dependent hydrolysis of ester, thioester, amide, peptide and isopeptide bonds formed by the C-terminal Gly of ubiquitin (a 76-residue protein attached to proteins as an intracellular targeting signal).. Recognizes and hydrolyzes the peptide bond at the C-terminal Gly of ubiquitin. Involved in the processing of poly-ubiquitin precursors as well as that of ubiquitinated proteins. This is Ubiquitin carboxyl-terminal hydrolase 5 (UBP5) from Arabidopsis thaliana (Mouse-ear cress).